Reading from the N-terminus, the 112-residue chain is uncharacterized protein (112 aa).

Residues 89 to 106 (TLYVLVIVGLTILCFLLV) form a helical membrane-spanning segment.

This sequence belongs to the IIV-6 466R family.

It is found in the membrane. This is an uncharacterized protein from Aedes vexans (Inland floodwater mosquito).